The following is a 962-amino-acid chain: Probable transport protein MmpL9 (962 aa).

The next 12 helical transmembrane spans lie at 25–45 (LAAIPILLCWLGFTVFVSVAV), 201–223 (LITGLTFAVITVLLLLVYRSIAT), 225–247 (LLILPMVFIGLGATRGTIAFLGY), 256–276 (FVVNILTALAIAAGTDYAIFL), 302–322 (ANVILGSGLTIAGATYCLSFA), 335–355 (AIGMLVSVAAALTLAPAIIAI), 383–403 (WPGPILATSVALALVGLLALP), 768–788 (YDILIVGIAAVCLVFIVMLMI), 796–816 (LVIVGTVLLSLGTAFGLSVLI), 820–840 (FVGLQVHWTIVAMSVIVLLAV), 867–887 (AMAGTGAVVTSAGLVFAFTMA), and 895–915 (RVIGQVGTTIGLGLLFDTLVV).

It belongs to the resistance-nodulation-cell division (RND) (TC 2.A.6) family. MmpL subfamily.

The protein localises to the cell membrane. The polypeptide is Probable transport protein MmpL9 (mmpL9) (Mycobacterium tuberculosis (strain ATCC 25618 / H37Rv)).